The chain runs to 133 residues: Fluoride-specific ion channel FluC (133 aa).

Transmembrane regions (helical) follow at residues 12–32, 41–61, 76–96, and 104–124; these read LAMT…ASLI, WGTL…LVWL, IVGV…CLVF, and MIGI…VAGA. Residues G81 and T84 each coordinate Na(+).

Belongs to the fluoride channel Fluc/FEX (TC 1.A.43) family.

The protein localises to the cell inner membrane. The enzyme catalyses fluoride(in) = fluoride(out). Its activity is regulated as follows. Na(+) is not transported, but it plays an essential structural role and its presence is essential for fluoride channel function. In terms of biological role, fluoride-specific ion channel. Important for reducing fluoride concentration in the cell, thus reducing its toxicity. In Xanthomonas euvesicatoria pv. vesicatoria (strain 85-10) (Xanthomonas campestris pv. vesicatoria), this protein is Fluoride-specific ion channel FluC.